We begin with the raw amino-acid sequence, 345 residues long: Leucine-rich repeat-containing protein 69 (345 aa).

LRR repeat units lie at residues 13–34 (KAKTLNLNGKRLQRVPVAVGCL), 36–58 (SLTELQLKNNLLCRLPVELSALC), 59–80 (RLRVLHLGNNHFEKVPEEIKYL), 82–103 (CLERLHLFGNRISEIPAAALDG), 106–127 (NLLFLNLNNNLLEHLPREIYKL), 129–151 (SLETLSINNNHMKAIPKELCFLQ), 152–173 (NLQELHLANNQLDSLPDELSYL), 175–196 (NLKELRLSRNQLTGLPEGICKL), 198–219 (KLKILDVAGNFIRSFPSAMHRV), and 220–241 (PLTELYCEENPLLEKQPVFARQ).

The protein belongs to the LRRC69 family.

The protein is Leucine-rich repeat-containing protein 69 (lrrc69) of Xenopus laevis (African clawed frog).